The chain runs to 121 residues: Large ribosomal subunit protein bL12 (121 aa).

Belongs to the bacterial ribosomal protein bL12 family. In terms of assembly, homodimer. Part of the ribosomal stalk of the 50S ribosomal subunit. Forms a multimeric L10(L12)X complex, where L10 forms an elongated spine to which 2 to 4 L12 dimers bind in a sequential fashion. Binds GTP-bound translation factors.

In terms of biological role, forms part of the ribosomal stalk which helps the ribosome interact with GTP-bound translation factors. Is thus essential for accurate translation. This chain is Large ribosomal subunit protein bL12, found in Erwinia tasmaniensis (strain DSM 17950 / CFBP 7177 / CIP 109463 / NCPPB 4357 / Et1/99).